Consider the following 223-residue polypeptide: ATP-dependent dethiobiotin synthetase BioD (223 aa).

Thr16 lines the Mg(2+) pocket. Lys37 is a catalytic residue. Ser41 contacts substrate. Positions 50 and 111 each coordinate Mg(2+). ATP contacts are provided by residues Asp50, 111–114, and 171–172; these read EGAG and NR.

The protein belongs to the dethiobiotin synthetase family. In terms of assembly, homodimer. Mg(2+) serves as cofactor.

It is found in the cytoplasm. It carries out the reaction (7R,8S)-7,8-diammoniononanoate + CO2 + ATP = (4R,5S)-dethiobiotin + ADP + phosphate + 3 H(+). Its pathway is cofactor biosynthesis; biotin biosynthesis; biotin from 7,8-diaminononanoate: step 1/2. Functionally, catalyzes a mechanistically unusual reaction, the ATP-dependent insertion of CO2 between the N7 and N8 nitrogen atoms of 7,8-diaminopelargonic acid (DAPA, also called 7,8-diammoniononanoate) to form a ureido ring. The sequence is that of ATP-dependent dethiobiotin synthetase BioD from Anaeromyxobacter dehalogenans (strain 2CP-C).